Consider the following 1226-residue polypeptide: Methionine synthase (1226 aa).

The Hcy-binding domain occupies 6–326; that stretch reads RQQIEAQLKQ…EHIRQMAQAV (321 aa). Positions 248, 311, and 312 each coordinate Zn(2+). Residues 357–618 form the Pterin-binding domain; the sequence is FINVGERTNV…VPEKLREAVE (262 aa). One can recognise a B12-binding N-terminal domain in the interval 651–745; sequence SALEWRTWPV…FINAEKQSGS (95 aa). Methylcob(III)alamin contacts are provided by residues E695, 757–761, H760, S805, T809, and A861; that span reads GDVHD. The B12-binding domain occupies 747 to 882; it reads NGKILLATVK…SDERRPAFIE (136 aa). Residues 898–1226 form the AdoMet activation domain; the sequence is KKPRTKPVTL…EKWLGPNING (329 aa). S-adenosyl-L-methionine is bound by residues D948, R1136, and 1191–1192; that span reads YF.

The protein belongs to the vitamin-B12 dependent methionine synthase family. The cofactor is methylcob(III)alamin. Requires Zn(2+) as cofactor.

It carries out the reaction (6S)-5-methyl-5,6,7,8-tetrahydrofolate + L-homocysteine = (6S)-5,6,7,8-tetrahydrofolate + L-methionine. The protein operates within amino-acid biosynthesis; L-methionine biosynthesis via de novo pathway; L-methionine from L-homocysteine (MetH route): step 1/1. Its function is as follows. Catalyzes the transfer of a methyl group from methyl-cobalamin to homocysteine, yielding enzyme-bound cob(I)alamin and methionine. Subsequently, remethylates the cofactor using methyltetrahydrofolate. This Vibrio parahaemolyticus serotype O3:K6 (strain RIMD 2210633) protein is Methionine synthase (metH).